A 442-amino-acid chain; its full sequence is tRNA modification GTPase MnmE (442 aa).

Residues Arg21, Glu79, and Lys118 each coordinate (6S)-5-formyl-5,6,7,8-tetrahydrofolate. The TrmE-type G domain occupies 214 to 367 (GFKIAIVGKP…LKEELQNYLN (154 aa)). Asn224 is a binding site for K(+). Residues 224-229 (NVGKSS), 243-249 (SDIAGTT), and 268-271 (DTAG) contribute to the GTP site. Position 228 (Ser228) interacts with Mg(2+). Residues Ser243, Ile245, and Thr248 each contribute to the K(+) site. A Mg(2+)-binding site is contributed by Thr249. Residue Lys442 coordinates (6S)-5-formyl-5,6,7,8-tetrahydrofolate.

This sequence belongs to the TRAFAC class TrmE-Era-EngA-EngB-Septin-like GTPase superfamily. TrmE GTPase family. As to quaternary structure, homodimer. Heterotetramer of two MnmE and two MnmG subunits. It depends on K(+) as a cofactor.

Its subcellular location is the cytoplasm. Exhibits a very high intrinsic GTPase hydrolysis rate. Involved in the addition of a carboxymethylaminomethyl (cmnm) group at the wobble position (U34) of certain tRNAs, forming tRNA-cmnm(5)s(2)U34. This is tRNA modification GTPase MnmE from Campylobacter jejuni subsp. jejuni serotype O:23/36 (strain 81-176).